The primary structure comprises 253 residues: Glucosamine-6-phosphate deaminase (253 aa).

The active-site Proton acceptor; for enolization step is the aspartate 67. The active-site For ring-opening step is the asparagine 136. Histidine 138 (proton acceptor; for ring-opening step) is an active-site residue. The active-site For ring-opening step is glutamate 143.

The protein belongs to the glucosamine/galactosamine-6-phosphate isomerase family. NagB subfamily.

The catalysed reaction is alpha-D-glucosamine 6-phosphate + H2O = beta-D-fructose 6-phosphate + NH4(+). The protein operates within amino-sugar metabolism; N-acetylneuraminate degradation; D-fructose 6-phosphate from N-acetylneuraminate: step 5/5. Functionally, catalyzes the reversible isomerization-deamination of glucosamine 6-phosphate (GlcN6P) to form fructose 6-phosphate (Fru6P) and ammonium ion. The chain is Glucosamine-6-phosphate deaminase from Thermoanaerobacter pseudethanolicus (strain ATCC 33223 / 39E) (Clostridium thermohydrosulfuricum).